The chain runs to 333 residues: Fructose-1,6-bisphosphatase class 1 (333 aa).

Residues E92, D114, L116, and D117 each contribute to the Mg(2+) site. Residues 117 to 120 and N209 contribute to the substrate site; that span reads DGSS. E279 serves as a coordination point for Mg(2+).

It belongs to the FBPase class 1 family. In terms of assembly, homotetramer. It depends on Mg(2+) as a cofactor.

Its subcellular location is the cytoplasm. The catalysed reaction is beta-D-fructose 1,6-bisphosphate + H2O = beta-D-fructose 6-phosphate + phosphate. It participates in carbohydrate biosynthesis; gluconeogenesis. This is Fructose-1,6-bisphosphatase class 1 from Alkalilimnicola ehrlichii (strain ATCC BAA-1101 / DSM 17681 / MLHE-1).